The primary structure comprises 379 residues: Chaperone protein DnaJ (379 aa).

The region spanning 6-71 is the J domain; that stretch reads DYYEVLGVDK…QKRSRYDQFG (66 aa). The segment at 138-220 adopts a CR-type zinc-finger fold; the sequence is GVEREINVSK…CNGKGRLRST (83 aa). Zn(2+) contacts are provided by Cys151, Cys154, Cys168, Cys171, Cys194, Cys197, Cys208, and Cys211. CXXCXGXG motif repeat units lie at residues 151 to 158, 168 to 175, 194 to 201, and 208 to 215; these read CSKCTGSG, CNHCNGTG, CDACKGEG, and CPACNGKG.

It belongs to the DnaJ family. As to quaternary structure, homodimer. The cofactor is Zn(2+).

The protein localises to the cytoplasm. In terms of biological role, participates actively in the response to hyperosmotic and heat shock by preventing the aggregation of stress-denatured proteins and by disaggregating proteins, also in an autonomous, DnaK-independent fashion. Unfolded proteins bind initially to DnaJ; upon interaction with the DnaJ-bound protein, DnaK hydrolyzes its bound ATP, resulting in the formation of a stable complex. GrpE releases ADP from DnaK; ATP binding to DnaK triggers the release of the substrate protein, thus completing the reaction cycle. Several rounds of ATP-dependent interactions between DnaJ, DnaK and GrpE are required for fully efficient folding. Also involved, together with DnaK and GrpE, in the DNA replication of plasmids through activation of initiation proteins. The sequence is that of Chaperone protein DnaJ from Ruminiclostridium cellulolyticum (strain ATCC 35319 / DSM 5812 / JCM 6584 / H10) (Clostridium cellulolyticum).